The chain runs to 79 residues: Acyl carrier protein (79 aa).

Residues 4-79 (AEIKDKVYDI…QAIDYIVNKK (76 aa)) enclose the Carrier domain. Position 39 is an O-(pantetheine 4'-phosphoryl)serine (Ser-39).

This sequence belongs to the acyl carrier protein (ACP) family. In terms of processing, 4'-phosphopantetheine is transferred from CoA to a specific serine of apo-ACP by AcpS. This modification is essential for activity because fatty acids are bound in thioester linkage to the sulfhydryl of the prosthetic group.

Its subcellular location is the cytoplasm. It participates in lipid metabolism; fatty acid biosynthesis. Its function is as follows. Carrier of the growing fatty acid chain in fatty acid biosynthesis. The sequence is that of Acyl carrier protein from Chlorobaculum parvum (strain DSM 263 / NCIMB 8327) (Chlorobium vibrioforme subsp. thiosulfatophilum).